The following is a 173-amino-acid chain: Small ribosomal subunit protein uS11m (173 aa).

Belongs to the universal ribosomal protein uS11 family.

It localises to the mitochondrion. This is Small ribosomal subunit protein uS11m (RPS11) from Acanthamoeba castellanii (Amoeba).